A 239-amino-acid polypeptide reads, in one-letter code: tRNA (guanine-N(1)-)-methyltransferase (239 aa).

S-adenosyl-L-methionine-binding positions include glycine 109 and 128-133; that span reads IGDYVL.

It belongs to the RNA methyltransferase TrmD family. Homodimer.

It is found in the cytoplasm. The catalysed reaction is guanosine(37) in tRNA + S-adenosyl-L-methionine = N(1)-methylguanosine(37) in tRNA + S-adenosyl-L-homocysteine + H(+). Specifically methylates guanosine-37 in various tRNAs. The protein is tRNA (guanine-N(1)-)-methyltransferase of Thermus thermophilus (strain ATCC BAA-163 / DSM 7039 / HB27).